The following is a 356-amino-acid chain: Alanine racemase (356 aa).

K34 acts as the Proton acceptor; specific for D-alanine in catalysis. K34 carries the N6-(pyridoxal phosphate)lysine modification. R129 lines the substrate pocket. Y253 acts as the Proton acceptor; specific for L-alanine in catalysis. M301 serves as a coordination point for substrate.

This sequence belongs to the alanine racemase family. Requires pyridoxal 5'-phosphate as cofactor.

The catalysed reaction is L-alanine = D-alanine. The protein operates within amino-acid biosynthesis; D-alanine biosynthesis; D-alanine from L-alanine: step 1/1. Its function is as follows. Catalyzes the interconversion of L-alanine and D-alanine. May also act on other amino acids. This is Alanine racemase (alr) from Nitrosococcus oceani (strain ATCC 19707 / BCRC 17464 / JCM 30415 / NCIMB 11848 / C-107).